Consider the following 239-residue polypeptide: 2-C-methyl-D-erythritol 4-phosphate cytidylyltransferase (239 aa).

This sequence belongs to the IspD/TarI cytidylyltransferase family. IspD subfamily.

It carries out the reaction 2-C-methyl-D-erythritol 4-phosphate + CTP + H(+) = 4-CDP-2-C-methyl-D-erythritol + diphosphate. It participates in isoprenoid biosynthesis; isopentenyl diphosphate biosynthesis via DXP pathway; isopentenyl diphosphate from 1-deoxy-D-xylulose 5-phosphate: step 2/6. Functionally, catalyzes the formation of 4-diphosphocytidyl-2-C-methyl-D-erythritol from CTP and 2-C-methyl-D-erythritol 4-phosphate (MEP). The protein is 2-C-methyl-D-erythritol 4-phosphate cytidylyltransferase of Acidobacterium capsulatum (strain ATCC 51196 / DSM 11244 / BCRC 80197 / JCM 7670 / NBRC 15755 / NCIMB 13165 / 161).